A 178-amino-acid chain; its full sequence is Large ribosomal subunit protein uL5 (178 aa).

The protein belongs to the universal ribosomal protein uL5 family. In terms of assembly, part of the 50S ribosomal subunit; part of the 5S rRNA/L5/L18/L25 subcomplex. Contacts the 5S rRNA and the P site tRNA. Forms a bridge to the 30S subunit in the 70S ribosome.

This is one of the proteins that bind and probably mediate the attachment of the 5S RNA into the large ribosomal subunit, where it forms part of the central protuberance. In the 70S ribosome it contacts protein S13 of the 30S subunit (bridge B1b), connecting the 2 subunits; this bridge is implicated in subunit movement. Contacts the P site tRNA; the 5S rRNA and some of its associated proteins might help stabilize positioning of ribosome-bound tRNAs. The polypeptide is Large ribosomal subunit protein uL5 (Prochlorococcus marinus (strain MIT 9515)).